The primary structure comprises 225 residues: Heptaprenylglyceryl phosphate synthase (225 aa).

Residue Lys-6 coordinates sn-glycerol 1-phosphate. The Mg(2+) site is built by Asp-8 and Thr-34. Sn-glycerol 1-phosphate-binding positions include 153-158 (YVEYSG), Gly-183, and 203-204 (GN).

Belongs to the GGGP/HepGP synthase family. Group I subfamily. Homodimer. The cofactor is Mg(2+).

It catalyses the reaction sn-glycerol 1-phosphate + all-trans-heptaprenyl diphosphate = 3-heptaprenyl-sn-glycero-1-phosphate + diphosphate. The protein operates within membrane lipid metabolism; glycerophospholipid metabolism. Prenyltransferase that catalyzes in vivo the transfer of the heptaprenyl moiety of heptaprenyl pyrophosphate (HepPP; 35 carbon atoms) to the C3 hydroxyl of sn-glycerol-1-phosphate (G1P), producing heptaprenylglyceryl phosphate (HepGP). This reaction is an ether-bond-formation step in the biosynthesis of archaea-type G1P-based membrane lipids found in Bacillales. The sequence is that of Heptaprenylglyceryl phosphate synthase from Listeria monocytogenes serotype 4b (strain F2365).